Reading from the N-terminus, the 357-residue chain is Isopentenyl-diphosphate delta-isomerase (357 aa).

Residue 13–14 participates in substrate binding; it reads RK. Residues Ser71, 72–74, Ser102, and Asn131 each bind FMN; that span reads SMT. 102–104 lines the substrate pocket; the sequence is SMR. Gln166 is a binding site for substrate. Glu167 contributes to the Mg(2+) binding site. FMN-binding positions include Lys198 and 311–312; that span reads AR.

The protein belongs to the IPP isomerase type 2 family. As to quaternary structure, homooctamer. Dimer of tetramers. FMN is required as a cofactor. It depends on NADPH as a cofactor. Mg(2+) serves as cofactor.

The protein resides in the cytoplasm. The catalysed reaction is isopentenyl diphosphate = dimethylallyl diphosphate. Involved in the biosynthesis of isoprenoids. Catalyzes the 1,3-allylic rearrangement of the homoallylic substrate isopentenyl (IPP) to its allylic isomer, dimethylallyl diphosphate (DMAPP). In Chlorobium chlorochromatii (strain CaD3), this protein is Isopentenyl-diphosphate delta-isomerase.